We begin with the raw amino-acid sequence, 407 residues long: Probable cysteine protease atg4 (407 aa).

The active-site Nucleophile is the C136. Catalysis depends on residues D310 and H312.

This sequence belongs to the peptidase C54 family.

Its subcellular location is the cytoplasm. The protein localises to the nucleus. It is found in the preautophagosomal structure. It catalyses the reaction [protein]-C-terminal L-amino acid-glycyl-phosphatidylethanolamide + H2O = [protein]-C-terminal L-amino acid-glycine + a 1,2-diacyl-sn-glycero-3-phosphoethanolamine. In terms of biological role, cysteine protease that is required for autophagy. Plays a key role in cytoplasm to vacuole transport (Cvt) and autophagy by mediating both proteolytic activation and delipidation of atg8. The protease activity is required for proteolytic activation of atg8 by the cleavage of the C-terminal amino acid of atg8 to reveal a C-terminal glycine. Azg8 ubiquitin-like activity requires the exposure of the glycine at the C-terminus for its conjugation to phosphatidylethanolamine (PE) and its insertion to membranes, which is necessary for autophagy. The atg8-PE conjugate mediates tethering between adjacent membranes and stimulates membrane hemifusion, leading to expansion of the autophagosomal membrane during autophagy. In addition to the protease activity, also catalyzes deconjugation of PE-conjugated forms of atg8 during macroautophagy since atg8 delipidation is required to release the protein from membranes, which facilitates multiple events during macroautophagy, and especially for efficient autophagosome biogenesis, the assembly of atg99-containing tubulovesicular clusters into phagophores/autophagosomes, and for the disassembly of PAS-associated ATG components. Atg8 delipidation by atg4 also recycles atg8-PE generated on inappropriate membranes to maintain a reservoir of unlipidated atg8 that is required for autophagosome formation at the PAS. In Aspergillus oryzae (strain ATCC 42149 / RIB 40) (Yellow koji mold), this protein is Probable cysteine protease atg4.